Reading from the N-terminus, the 430-residue chain is Histidine--tRNA ligase, chloroplastic (430 aa).

Belongs to the class-II aminoacyl-tRNA synthetase family.

It is found in the plastid. It localises to the chloroplast. It carries out the reaction tRNA(His) + L-histidine + ATP = L-histidyl-tRNA(His) + AMP + diphosphate + H(+). This Porphyra purpurea (Red seaweed) protein is Histidine--tRNA ligase, chloroplastic (hisS).